The primary structure comprises 395 residues: Serine/threonine-protein kinase BIK1 (395 aa).

Gly-2 is lipidated: N-myristoyl glycine. The S-palmitoyl cysteine moiety is linked to residue Cys-4. A Phosphoserine modification is found at Ser-26. A Glycyl lysine isopeptide (Lys-Gly) (interchain with G-Cter in ubiquitin) cross-link involves residue Lys-31. Phosphoserine is present on residues Ser-32, Ser-33, and Ser-34. Position 35 is a phosphothreonine (Thr-35). Residue Lys-41 forms a Glycyl lysine isopeptide (Lys-Gly) (interchain with G-Cter in ubiquitin) linkage. At Thr-42 the chain carries Phosphothreonine. At Ser-48 the chain carries Phosphoserine; by autocatalysis and BAK1. Thr-50 carries the post-translational modification Phosphothreonine. At Ser-54 the chain carries Phosphoserine; by autocatalysis. A Phosphothreonine; by autocatalysis modification is found at Thr-56. Residue Thr-64 is modified to Phosphothreonine. A Protein kinase domain is found at 67–356; that stretch reads FRPDSVIGEG…RALQQLQDNL (290 aa). Ser-71 carries the post-translational modification Phosphoserine; by autocatalysis and BAK1. 73–81 contributes to the ATP binding site; it reads IGEGGFGCV. Ser-89 carries the post-translational modification Phosphoserine; by EFR. Positions 89–90 match the Required for physical interaction with and phosphorylation of downstream signaling proteins (e.g. WRKY33, WRKY50, WRKY51 and WRKY57) to activate EFR-mediated immune signaling motif; the sequence is ST. Thr-90 carries the phosphothreonine; by EFR modification. Residue Lys-95 forms a Glycyl lysine isopeptide (Lys-Gly) (interchain with G-Cter in ubiquitin) linkage. Lys-105 serves as a coordination point for ATP. Thr-120 carries the post-translational modification Phosphothreonine; by EFR. A Phosphoserine; by autocatalysis modification is found at Ser-129. Ser-129 carries the phosphoserine; by EFR modification. Tyr-150 carries the phosphotyrosine modification. Phosphotyrosine; by autocatalysis is present on Tyr-168. Residues Lys-170 and Lys-186 each participate in a glycyl lysine isopeptide (Lys-Gly) (interchain with G-Cter in ubiquitin) cross-link. A Phosphoserine modification is found at Ser-193. Asp-202 acts as the Proton acceptor in catalysis. At Ser-206 the chain carries Phosphoserine; by autocatalysis and BAK1. Position 214 is a phosphotyrosine; by autocatalysis (Tyr-214). Phosphoserine is present on Ser-219. Position 233 is a phosphoserine; by autocatalysis (Ser-233). Ser-236 carries the post-translational modification O-UMP-serine; by Xanthomonas campestris effector XopAC/AvrAC; alternate. Ser-236 carries the post-translational modification Phosphoserine; by autocatalysis and BAK1; alternate. Position 237 is an O-UMP-threonine; by Xanthomonas campestris effector XopAC/AvrAC; alternate (Thr-237). Thr-237 is modified (phosphothreonine; by autocatalysis and BAK1; alternate). Thr-242 is subject to Phosphothreonine; by autocatalysis and BAK1. Tyr-243 bears the Phosphotyrosine mark. Residue Tyr-250 is modified to Phosphotyrosine; by autocatalysis. Phosphoserine; by autocatalysis occurs at positions 252 and 253. Residue Lys-286 forms a Glycyl lysine isopeptide (Lys-Gly) (interchain with G-Cter in ubiquitin) linkage. Thr-314 carries the post-translational modification Phosphothreonine; by autocatalysis. Lys-337 participates in a covalent cross-link: Glycyl lysine isopeptide (Lys-Gly) (interchain with G-Cter in ubiquitin). Thr-341 bears the Phosphothreonine mark. The span at 354–365 shows a compositional bias: polar residues; that stretch reads DNLGKPSQTNPV. A disordered region spans residues 354 to 395; that stretch reads DNLGKPSQTNPVKDTKKLGFKTGTTKSSEKRFTQKPFGRHLV. Lys-358 participates in a covalent cross-link: Glycyl lysine isopeptide (Lys-Gly) (interchain with G-Cter in ubiquitin). Ser-360 bears the Phosphoserine; by autocatalysis and BAK1 mark. Thr-362 is modified (phosphothreonine; by autocatalysis and BAK1). Lys-366 participates in a covalent cross-link: Glycyl lysine isopeptide (Lys-Gly) (interchain with G-Cter in ubiquitin). Thr-368 is subject to Phosphothreonine; by autocatalysis and BAK1. A phosphothreonine mark is found at Thr-375 and Thr-377.

The protein belongs to the protein kinase superfamily. Ser/Thr protein kinase family. Interacts with FLS2. Activation of FLS2 by flagellin (flg22) induces the dissociation of the complex. Interacts with BAK1. Interacts with the Xanthomonas campestris effector XopAC/AvrAC. Interacts with CPK28. Interacts with PEPR1. Interacts with PP2C38. Interacts with BRI1. Interacts with RBOHD. Binds to EFR when not phosphorylated at Ser-89 and Thr-90, in the absence of pathogen elicitor; dissociates upon pathogen-associated molecular pattern (PAMP)-triggered activation by EFR-mediated phosphorylation. Interacts directly with and phosphorylates WRKY transcription factors in the nucleus involved in the jasmonic acid (JA) and salicylic acid (SA) regulation (e.g. WRKY33, WRKY50, WRKY51 and WRKY57) to modulate defense hormones during plant immunity. Binds to ATL44/RHA3A and ATL45/RHA3B. Binds to SIK1 to be phosphorylated and stabilized. Phosphorylated by SIK1 to be stabilized. Phosphorylated by FLS2 and BAK1. Autophosphorylated. Autophosphorylation is reduced in presence of the Xanthomonas campestris effector XopAC/AvrAC. Phosphorylated, especially by EFR at Ser-89 and Thr-90, in response to the microbe-associated molecular pattern (MAMP) flg22. Phosphorylation in response to flg22 is abolished in presence of the Xanthomonas campestris effector XopAC/AvrAC. Phosphorylated at Ser-233, Ser-236 and Thr-237 by PEPR1. Phosphorylated at Tyr-150, Tyr-243 and Tyr-250. Tyrosine phosphorylation is required for BIK1 function in plant innate immunity. Post-translationally, uridylylated at Ser-236 and Thr-237 by the Xanthomonas campestris effector XopAC/AvrAC. This conceals conserved phosphorylation sites in the activation loop, reducing BIK1 kinase activity and consequently inhibiting downstream signaling. In terms of processing, monoubiquitinated by ATL44/RHA3A and ATL45/RHA3B following phosphorylation upon the recognition of microbe-associated molecular patterns (MAMPs, e.g. flg22) by pattern recognition receptors (PRRs), then released from the FLS2/BAK1 complex and internalized dynamically into endocytic compartments followed by the activation of immune signaling.

It is found in the cell membrane. The protein resides in the endosome membrane. It localises to the nucleus. The enzyme catalyses L-seryl-[protein] + ATP = O-phospho-L-seryl-[protein] + ADP + H(+). The catalysed reaction is L-threonyl-[protein] + ATP = O-phospho-L-threonyl-[protein] + ADP + H(+). Its activity is regulated as follows. Kinase activation is repressed by the phosphatase PP2C38. Its function is as follows. Plays a central role in immune responses. Required to activate the resistance responses to necrotrophic pathogens, including the regulation of defense hormone expression (e.g. jasmonic acid (JA) and salicylic acid (SA)). Phosphorylates FLS2 and BAK1. Involved in pathogen-associated molecular pattern (PAMP)-triggered immunity (PTI) signaling, including calcium signaling, and defense responses downstream of FLS2; upon PAMP recognition, first phosphorylated by FLS2 and SIK1 prior to being monoubiquitinated by ATL44/RHA3A and ATL45/RHA3B at the plasma membrane, then internalized dynamically into endocytic compartments together with FLS2. Acts additively with PBL1 in PTI defenses. Acts as a positive regulator of the PAMP flg22-induced increase of cytosolic calcium. Upon flg22 perception, phosphorylates and activates the calcium-permeable channel OSCA1.3, promoting stomatal closure. Phosphorylates the NADPH oxidase RBOHD at specific sites in a calcium-independent manner to enhance reactive oxygen species (ROS) generation upon flg22 perception. ROS production in response to flg22 controls stomatal movement and restriction of bacterial entry into leaf tissues. Seems not required for flg22-induced MAPK activation. Required for Pep1-induced defenses. Pep1 is an endogenous elicitor that potentiates PAMP-inducible plant responses. In association with PEPR1, acts downstream of the canonical ethylene signaling cascade to regulate ethylene responses. Involved in ethylene signaling. Destabilizes EIN3, the key transcription activator in ethylene signaling, and represses EIN3-dependent transcription. Acts as a negative regulator in brassinosteroid (BR) signaling. Functions in BR signaling by direct interaction with the BR receptor BRI1 cytosolic kinase domain. Required during SCOOP small peptides (e.g. SCOOP10 and SCOOP12) perception and signaling; receptor-like cytosolic kinases (RLCK) activated by BAK1/SERK3 and SERK4 coreceptors when associated with MIK2 upon the perception of SCOOP peptides. In terms of biological role, (Microbial infection) Xanthomonas campestris effector AvrAC/XopAC-mediated uridylylation prevents activation by phosphorylation at the same residues, thus affecting immune responses and reducing defense responses toward X.campestris, mediating avrAC/XopAC virulence functions. In Arabidopsis thaliana (Mouse-ear cress), this protein is Serine/threonine-protein kinase BIK1.